A 493-amino-acid polypeptide reads, in one-letter code: NADH-quinone oxidoreductase subunit N 2 (493 aa).

The next 14 helical transmembrane spans lie at 16 to 36 (IIPAVMLALFGCAILLFDFLI), 45 to 65 (FLLIFVVLAEAFTGFGLFRQQ), 87 to 107 (GFAIFFNWIFLVAAVVVAIVS), 119 to 139 (GEYYSLILFAQCGMYFLATGT), 141 to 161 (LITLFIGLELMALCFYVMVGF), 176 to 196 (LLLGAFSSGFLVYGFSVMYGI), 219 to 239 (VFLALSTTSVGLLFKVSAVPF), 258 to 278 (LSVASKAASIAFLLRIFLGPL), 285 to 305 (WEPLLAFIAIITLTIGNLAAI), 313 to 333 (LLAYSSISHAGYMLLGLVAGN), 340 to 360 (IAVYVMVYTFMNLGAFLVIIA), 385 to 405 (AFLMLIFLLSLAGIPPTAGFL), 421 to 441 (GLAIVATLYVAVAIYYYFKIV), and 464 to 484 (CALALTGIATLAIGIYPEPFL).

This sequence belongs to the complex I subunit 2 family. In terms of assembly, NDH-1 is composed of 14 different subunits. Subunits NuoA, H, J, K, L, M, N constitute the membrane sector of the complex.

Its subcellular location is the cell inner membrane. The enzyme catalyses a quinone + NADH + 5 H(+)(in) = a quinol + NAD(+) + 4 H(+)(out). Functionally, NDH-1 shuttles electrons from NADH, via FMN and iron-sulfur (Fe-S) centers, to quinones in the respiratory chain. The immediate electron acceptor for the enzyme in this species is believed to be ubiquinone. Couples the redox reaction to proton translocation (for every two electrons transferred, four hydrogen ions are translocated across the cytoplasmic membrane), and thus conserves the redox energy in a proton gradient. This is NADH-quinone oxidoreductase subunit N 2 from Solibacter usitatus (strain Ellin6076).